A 205-amino-acid chain; its full sequence is Anaerobic dimethyl sulfoxide reductase chain B (205 aa).

4Fe-4S ferredoxin-type domains are found at residues 4–32 (YGFY…LGTE), 57–89 (NIFA…KNAD), and 90–119 (GFVI…YDAQ). The [4Fe-4S] cluster site is built by Cys-13, Cys-16, Cys-19, Cys-23, Cys-67, Cys-70, Cys-75, Cys-79, Cys-99, Cys-102, Cys-105, Cys-109, Cys-126, Cys-129, Cys-141, and Cys-145.

As to quaternary structure, heterotrimeric enzyme composed of a catalytic heterodimer (DmsAB) and a membrane anchor protein (DmsC). [4Fe-4S] cluster is required as a cofactor.

Its function is as follows. Electron transfer subunit of the terminal reductase during anaerobic growth on various sulfoxide and N-oxide compounds. The sequence is that of Anaerobic dimethyl sulfoxide reductase chain B (dmsB) from Haemophilus influenzae (strain ATCC 51907 / DSM 11121 / KW20 / Rd).